We begin with the raw amino-acid sequence, 261 residues long: Thiazole synthase (261 aa).

Lys101 functions as the Schiff-base intermediate with DXP in the catalytic mechanism. 1-deoxy-D-xylulose 5-phosphate contacts are provided by residues Gly162, 188-189 (AG), and 210-211 (NT).

Belongs to the ThiG family. As to quaternary structure, homotetramer. Forms heterodimers with either ThiH or ThiS.

Its subcellular location is the cytoplasm. It carries out the reaction [ThiS sulfur-carrier protein]-C-terminal-Gly-aminoethanethioate + 2-iminoacetate + 1-deoxy-D-xylulose 5-phosphate = [ThiS sulfur-carrier protein]-C-terminal Gly-Gly + 2-[(2R,5Z)-2-carboxy-4-methylthiazol-5(2H)-ylidene]ethyl phosphate + 2 H2O + H(+). It participates in cofactor biosynthesis; thiamine diphosphate biosynthesis. Its function is as follows. Catalyzes the rearrangement of 1-deoxy-D-xylulose 5-phosphate (DXP) to produce the thiazole phosphate moiety of thiamine. Sulfur is provided by the thiocarboxylate moiety of the carrier protein ThiS. In vitro, sulfur can be provided by H(2)S. This is Thiazole synthase from Azoarcus sp. (strain BH72).